Here is a 140-residue protein sequence, read N- to C-terminus: 3-hydroxyacyl-[acyl-carrier-protein] dehydratase FabZ (140 aa).

His48 is a catalytic residue.

Belongs to the thioester dehydratase family. FabZ subfamily.

Its subcellular location is the cytoplasm. The catalysed reaction is a (3R)-hydroxyacyl-[ACP] = a (2E)-enoyl-[ACP] + H2O. Involved in unsaturated fatty acids biosynthesis. Catalyzes the dehydration of short chain beta-hydroxyacyl-ACPs and long chain saturated and unsaturated beta-hydroxyacyl-ACPs. This Caldicellulosiruptor saccharolyticus (strain ATCC 43494 / DSM 8903 / Tp8T 6331) protein is 3-hydroxyacyl-[acyl-carrier-protein] dehydratase FabZ.